The sequence spans 152 residues: ARL14 effector protein-like (152 aa).

The segment at 1–21 is disordered; that stretch reads MNEQSEKNNSIQERHTDHSFP.

The sequence is that of ARL14 effector protein-like (ARL14EPL) from Homo sapiens (Human).